Consider the following 461-residue polypeptide: ADP-specific phosphofructokinase (461 aa).

One can recognise an ADPK domain in the interval 1 to 457; that stretch reads MVRELLEKAR…FTSYLAMLKE (457 aa). Positions 268, 298, and 441 each coordinate Mg(2+). The active-site Proton acceptor is Asp441.

The protein belongs to the carbohydrate kinase PfkC family. Mg(2+) is required as a cofactor.

It localises to the cytoplasm. The catalysed reaction is beta-D-fructose 6-phosphate + ADP = beta-D-fructose 1,6-bisphosphate + AMP + H(+). Its pathway is carbohydrate degradation; glycolysis. Catalyzes the phosphorylation of fructose 6-phosphate to fructose 1,6-bisphosphate using ADP as the phosphate donor. The chain is ADP-specific phosphofructokinase from Thermococcus kodakarensis (strain ATCC BAA-918 / JCM 12380 / KOD1) (Pyrococcus kodakaraensis (strain KOD1)).